The following is a 190-amino-acid chain: Jupiter microtubule associated homolog 2 (190 aa).

The residue at position 1 (methionine 1) is an N-acetylmethionine. The segment covering 1 to 15 has biased composition (polar residues); sequence MFQGADSQAGKSGSR. Positions 1–190 are disordered; the sequence is MFQGADSQAG…PGGKSSLSFY (190 aa). Lysine 11 carries the N6-acetyllysine modification. At serine 30 the chain carries Phosphoserine. Residues 35–44 show a composition bias toward polar residues; it reads ISSSKPNRMA. 3 positions are modified to phosphoserine: serine 45, serine 69, and serine 97. 2 stretches are compositionally biased toward basic and acidic residues: residues 110–129 and 138–153; these read KPKDHVLLCEGEDSKSDLKA and EQSDKGSSKEVEHAKI. Phosphoserine is present on serine 144.

Belongs to the JUPITER family. Monomer. Dimer. Interacts with TPCN1.

The protein resides in the cytoplasm. It localises to the nucleus. Its function is as follows. Nicotinic acid adenine dinucleotide phosphate (NAADP) binding protein required for NAADP-evoked intracellular calcium release. Confers NAADP-sensitivity to the two pore channels (TPCs) complex. Enables NAADP to activate Ca(2+) release from the endoplasmic reticulum through ryanodine receptors. The sequence is that of Jupiter microtubule associated homolog 2 from Mus musculus (Mouse).